The sequence spans 345 residues: Ferrochelatase (345 aa).

The Fe cation site is built by H215 and E296.

Belongs to the ferrochelatase family.

The protein resides in the cytoplasm. The catalysed reaction is heme b + 2 H(+) = protoporphyrin IX + Fe(2+). It participates in porphyrin-containing compound metabolism; protoheme biosynthesis; protoheme from protoporphyrin-IX: step 1/1. In terms of biological role, catalyzes the ferrous insertion into protoporphyrin IX. Essential for normal nodule development. The protein is Ferrochelatase of Bradyrhizobium diazoefficiens (strain JCM 10833 / BCRC 13528 / IAM 13628 / NBRC 14792 / USDA 110).